A 523-amino-acid polypeptide reads, in one-letter code: Sorting nexin-2 (523 aa).

The interval 1–104 (MAAEREPPPL…EPSPAVTPVT (104 aa)) is disordered. 2 stretches are compositionally biased toward low complexity: residues 27–50 (LFTS…LPAE) and 93–104 (SSEPSPAVTPVT). Ser97 bears the Phosphoserine mark. Phosphothreonine occurs at positions 101 and 104. Phosphoserine is present on residues Ser117 and Ser119. Residues 140–269 (FDIEIGVSDP…QFLESSELPR (130 aa)) form the PX domain. Arg183, Ser185, Lys211, and Arg235 together coordinate a 1,2-diacyl-sn-glycero-3-phospho-(1D-myo-inositol-3-phosphate). Residue Ser185 is modified to Phosphoserine. Residues 260 to 523 (QFLESSELPR…AFLPEAKAIA (264 aa)) are interaction with RhoG. Ser277 bears the Phosphoserine mark. Residues 278–295 (GAGILRMVNKAADAVNKM) form a membrane-binding amphipathic helix region. One can recognise a BAR domain in the interval 299–523 (MNESDAWFEE…AFLPEAKAIA (225 aa)). Position 473 is an N6-acetyllysine (Lys473).

It belongs to the sorting nexin family. As to quaternary structure, predominantly forms heterodimers with BAR domain-containing sorting nexins SNX5, SNX6 and SNX32; can self-associate to form homodimers. The heterodimers are proposed to self-assemble into helical arrays on the membrane to stabilize and expand local membrane curvature underlying endosomal tubule formation. Thought to be a component of the originally described retromer complex (also called SNX-BAR retromer) which is a pentamer containing the heterotrimeric retromer cargo-selective complex (CSC), also described as vacuolar protein sorting subcomplex (VPS), and a heterodimeric membrane-deforming subcomplex formed between SNX1 or SNX2 and SNX5 or SNX6 (also called SNX-BAR subcomplex); the respective CSC and SNX-BAR subcomplexes associate with low affinity. Interacts with SNX5, SNX6, SNX32, VPS26A, VPS29, VPS35, FNBP1, KALRN, RHOG (GDP-bound form).

It localises to the early endosome membrane. It is found in the cell projection. Its subcellular location is the lamellipodium. Its function is as follows. Involved in several stages of intracellular trafficking. Interacts with membranes containing phosphatidylinositol 3-phosphate (PtdIns(3P)) or phosphatidylinositol 3,5-bisphosphate (PtdIns(3,5)P2). Acts in part as component of the retromer membrane-deforming SNX-BAR subcomplex. The SNX-BAR retromer mediates retrograde transport of cargo proteins from endosomes to the trans-Golgi network (TGN) and is involved in endosome-to-plasma membrane transport for cargo protein recycling. The SNX-BAR subcomplex functions to deform the donor membrane into a tubular profile called endosome-to-TGN transport carrier (ETC). Can sense membrane curvature and has in vitro vesicle-to-membrane remodeling activity. Required for retrograde endosome-to-TGN transport of TGN38. Promotes KALRN- and RHOG-dependent but retromer-independent membrane remodeling such as lamellipodium formation; the function is dependent on GEF activity of KALRN. This is Sorting nexin-2 (SNX2) from Macaca fascicularis (Crab-eating macaque).